The sequence spans 381 residues: Chaperone protein DnaJ (381 aa).

A J domain is found at 5–70 (DYYEVLGIER…EKRSAYDQFG (66 aa)). The CR-type zinc finger occupies 137 to 215 (GTTVDIRVPR…CHGEGRVRET (79 aa)). 8 residues coordinate Zn(2+): Cys150, Cys153, Cys167, Cys170, Cys189, Cys192, Cys203, and Cys206. 4 CXXCXGXG motif repeats span residues 150 to 157 (CEHCDGDG), 167 to 174 (CPTCHGQG), 189 to 196 (CPTCHGAG), and 203 to 210 (CRKCHGEG).

Belongs to the DnaJ family. Homodimer. Requires Zn(2+) as cofactor.

The protein resides in the cytoplasm. In terms of biological role, participates actively in the response to hyperosmotic and heat shock by preventing the aggregation of stress-denatured proteins and by disaggregating proteins, also in an autonomous, DnaK-independent fashion. Unfolded proteins bind initially to DnaJ; upon interaction with the DnaJ-bound protein, DnaK hydrolyzes its bound ATP, resulting in the formation of a stable complex. GrpE releases ADP from DnaK; ATP binding to DnaK triggers the release of the substrate protein, thus completing the reaction cycle. Several rounds of ATP-dependent interactions between DnaJ, DnaK and GrpE are required for fully efficient folding. Also involved, together with DnaK and GrpE, in the DNA replication of plasmids through activation of initiation proteins. This chain is Chaperone protein DnaJ, found in Chromohalobacter salexigens (strain ATCC BAA-138 / DSM 3043 / CIP 106854 / NCIMB 13768 / 1H11).